The sequence spans 69 residues: MLKTGVLLLIFLVLFPLATLQDADQPVERNVENKQDLNLDKRRGMKLLAQRQQECCDPDWCDGACYNCC.

A signal peptide spans 1-20 (MLKTGVLLLIFLVLFPLATL). The propeptide occupies 21–51 (QDADQPVERNVENKQDLNLDKRRGMKLLAQR). At Gln52 the chain carries Pyrrolidone carboxylic acid. Glu54 is subject to 4-carboxyglutamate. Pro58 carries the post-translational modification 4-hydroxyproline.

It belongs to the conotoxin M superfamily. In terms of tissue distribution, expressed by the venom duct.

It localises to the secreted. In terms of biological role, probable toxin. The chain is Conotoxin Fr3.1 from Conus frigidus (Frigid cone).